We begin with the raw amino-acid sequence, 368 residues long: WD repeat-containing protein RUP2 (368 aa).

7 WD repeats span residues 38–77 (SASDVIGAIEFDPTDNIVATAGISRKIRFYGLPSLLRNNA), 97–138 (CTPA…PVFE), 141–184 (EHGG…EESV), 192–232 (ICRS…DPAL), 236–276 (GHTK…RTYE), 279–318 (VNNRNFVGLSVWRNGALFGCGSENNRVFVYDRRWGKPVWV), and 330–368 (SDKRFVSSVCWRQSGVDQCTLVAGGSDGVLQVYVGKRKP).

In terms of assembly, interacts with UVR8.

The protein localises to the nucleus. The protein resides in the cytoplasm. It localises to the cytosol. In terms of biological role, functions in association with RUP1 as repressor of UV-B-induced photomorphogenesis mediated by UVR8 and HY5. Plays a crucial negative feedback regulatory role downstream of UVR8-COP1 to inhibit UVR8 function, balance UV-B-specific responses and ensure normal plant growth. Is involved in the regulation of photoperiodic flowering and vegetative development. May act as negative regulator of photoperiodic flowering by suppressing flowering through the action of CONSTANS (CO) and FLOWERING LOCUS T (FT). The protein is WD repeat-containing protein RUP2 (RUP2) of Arabidopsis thaliana (Mouse-ear cress).